The sequence spans 285 residues: Ubiquinone biosynthesis protein COQ4, mitochondrial (285 aa).

Residues 1 to 11 (MPPAVRQGMRT) constitute a mitochondrion transit peptide. Zn(2+) contacts are provided by histidine 166, aspartate 167, histidine 170, and glutamate 182.

This sequence belongs to the COQ4 family. As to quaternary structure, component of a multi-subunit COQ enzyme complex, composed of at least COQ3, COQ4, COQ5, COQ6, COQ7 and COQ9. Zn(2+) serves as cofactor.

It is found in the mitochondrion inner membrane. The enzyme catalyses a 4-hydroxy-3-methoxy-5-(all-trans-polyprenyl)benzoate + H(+) = a 2-methoxy-6-(all-trans-polyprenyl)phenol + CO2. The protein operates within cofactor biosynthesis; ubiquinone biosynthesis. Lyase that catalyzes the C1-decarboxylation of 4-hydroxy-3-methoxy-5-(all-trans-polyprenyl)benzoic acid into 2-methoxy-6-(all-trans-polyprenyl)phenol during ubiquinone biosynthesis. The polypeptide is Ubiquinone biosynthesis protein COQ4, mitochondrial (Paracoccidioides lutzii (strain ATCC MYA-826 / Pb01) (Paracoccidioides brasiliensis)).